Reading from the N-terminus, the 512-residue chain is Pantetheinase (512 aa).

Residues methionine 1 to serine 23 form the signal peptide. Positions tyrosine 32–serine 308 constitute a CN hydrolase domain. Residue glutamate 81 is the Proton acceptor of the active site. N-linked (GlcNAc...) asparagine glycans are attached at residues asparagine 132 and asparagine 148. Residue lysine 180 is the Proton donor of the active site. The active-site Nucleophile is the cysteine 213. 2 N-linked (GlcNAc...) asparagine glycosylation sites follow: asparagine 316 and asparagine 354. Asparagine 488 carries GPI-anchor amidated asparagine lipidation. Residues alanine 489 to cysteine 512 constitute a propeptide, removed in mature form.

It belongs to the carbon-nitrogen hydrolase superfamily. BTD/VNN family. In terms of assembly, monomer. Post-translationally, N-glycosylated. As to expression, detected in kidney (at protein level). Ubiquitous.

The protein resides in the cell membrane. The enzyme catalyses (R)-pantetheine + H2O = cysteamine + (R)-pantothenate. Functionally, amidohydrolase that hydrolyzes specifically one of the carboamide linkages in D-pantetheine thus recycling pantothenic acid (vitamin B5) and releasing cysteamine. In Mus musculus (Mouse), this protein is Pantetheinase (Vnn1).